A 114-amino-acid chain; its full sequence is Large ribosomal subunit protein bL19 (114 aa).

Belongs to the bacterial ribosomal protein bL19 family.

In terms of biological role, this protein is located at the 30S-50S ribosomal subunit interface and may play a role in the structure and function of the aminoacyl-tRNA binding site. This Lactococcus lactis subsp. cremoris (strain MG1363) protein is Large ribosomal subunit protein bL19.